The chain runs to 220 residues: MPPRPQRLAPVADLPPVFAGIDEAGRGCLAGPVVAAAVILPQEYALPGLTDSKKLTAARRESLAEGIRSCAVTWGIGVVWPRDIDRINILQATFRAMARAVRVLRQPPPAILIDGDKTLPPHVLTSLSCDGHLPTQRAIIGGDGCIPAISAASILAKTFRDRLMDTLDRRYHGYGFAKHKGYGTAEHLAAIAAHGPCAQHRLTFRGVRPNPAAEEQLTLW.

The region spanning 16–216 (PVFAGIDEAG…VRPNPAAEEQ (201 aa)) is the RNase H type-2 domain. 3 residues coordinate a divalent metal cation: D22, E23, and D114.

It belongs to the RNase HII family. It depends on Mn(2+) as a cofactor. Requires Mg(2+) as cofactor.

Its subcellular location is the cytoplasm. The enzyme catalyses Endonucleolytic cleavage to 5'-phosphomonoester.. Functionally, endonuclease that specifically degrades the RNA of RNA-DNA hybrids. This Nitratidesulfovibrio vulgaris (strain ATCC 29579 / DSM 644 / CCUG 34227 / NCIMB 8303 / VKM B-1760 / Hildenborough) (Desulfovibrio vulgaris) protein is Ribonuclease HII.